The primary structure comprises 322 residues: MWRLAITRVFNDKFKNRFSDSYIMELKRENVLIEALPYMQEFYDSIMVIKVGGNAMVSAQIMEDIIKDIVLLRYVGIKPVIVHGGGPEITEKMGRMGKKAEFFQGLRITDDETMEIAKMVLVGNINTKIVSLIGVCGGKGIGLTGYDGRMILGHKQAAKKVLINGIETEVDIGWVGECEVINPDILHIVLENGYIPVISPIAVDAKGNALNINADIVAGDIAAALHAKKLILMTDVSGLLRDMNDPNSHISRVTLEDIDHLIAEGVIQGGMIPKLKGAAVAVKNGVEKAHIINGSVSHSMLLELFTDRGIGTMVYKFEKPKN.

Residues 85–86, arginine 107, and asparagine 211 contribute to the substrate site; that span reads GG.

This sequence belongs to the acetylglutamate kinase family. ArgB subfamily.

Its subcellular location is the cytoplasm. The catalysed reaction is N-acetyl-L-glutamate + ATP = N-acetyl-L-glutamyl 5-phosphate + ADP. The protein operates within amino-acid biosynthesis; L-arginine biosynthesis; N(2)-acetyl-L-ornithine from L-glutamate: step 2/4. In terms of biological role, catalyzes the ATP-dependent phosphorylation of N-acetyl-L-glutamate. The polypeptide is Acetylglutamate kinase (Methanosarcina barkeri (strain Fusaro / DSM 804)).